Consider the following 210-residue polypeptide: Large ribosomal subunit protein uL3 (210 aa).

Residues 125–151 form a disordered region; that stretch reads RHGQSRGPMSHGSRYHRRPGSMGPVAP.

The protein belongs to the universal ribosomal protein uL3 family. As to quaternary structure, part of the 50S ribosomal subunit. Forms a cluster with proteins L14 and L19.

In terms of biological role, one of the primary rRNA binding proteins, it binds directly near the 3'-end of the 23S rRNA, where it nucleates assembly of the 50S subunit. The chain is Large ribosomal subunit protein uL3 from Bacillus mycoides (strain KBAB4) (Bacillus weihenstephanensis).